We begin with the raw amino-acid sequence, 329 residues long: Quinone oxidoreductase (329 aa).

Ala2 is subject to N-acetylalanine. Lys23 carries the post-translational modification N6-acetyllysine. NADP(+) is bound by residues Tyr53, 158–161 (SGGV), Gly181, His200, Asn229, 246–249 (VGSR), and 269–271 (VAL). Phosphoserine is present on Ser248.

It belongs to the zinc-containing alcohol dehydrogenase family. Quinone oxidoreductase subfamily. As to quaternary structure, homotetramer.

It is found in the cytoplasm. The catalysed reaction is 2 a quinone + NADPH + H(+) = 2 a 1,4-benzosemiquinone + NADP(+). Does not have alcohol dehydrogenase activity. Binds NADP and acts through a one-electron transfer process. Orthoquinones, such as 1,2-naphthoquinone or 9,10-phenanthrenequinone, are the best substrates (in vitro). May act in the detoxification of xenobiotics. Interacts with (AU)-rich elements (ARE) in the 3'-UTR of target mRNA species and enhances their stability. NADPH binding interferes with mRNA binding. The sequence is that of Quinone oxidoreductase (CRYZ) from Sus scrofa (Pig).